Reading from the N-terminus, the 305-residue chain is Thyroxine 5-deiodinase (305 aa).

Over 1–43 (MPGQAGRRRLVGGGCRGSQGPLGGAATMLRSLLLHSLRLCAQT) the chain is Cytoplasmic. The chain crosses the membrane as a helical; Signal-anchor for type II membrane protein span at residues 44–63 (ASCLVLFPRFLGTACMLWLL). The Extracellular segment spans residues 64–305 (DFLCIRKHLL…QLHGPQPRRV (242 aa)). The segment at 79-98 (GEPETEVELNSDGDEVPPDD) is disordered. The span at 82 to 96 (ETEVELNSDGDEVPP) shows a compositional bias: acidic residues. Residue Sec171 is part of the active site. Sec171 is a non-standard amino acid (selenocysteine).

It belongs to the iodothyronine deiodinase family. In terms of assembly, monomer. Homodimer. May undergo minor heretodimerization with DIO1 and DIO2. Expressed in brain only.

It localises to the cell membrane. It is found in the endosome membrane. The catalysed reaction is 3,3',5'-triiodo-L-thyronine + iodide + A + H(+) = L-thyroxine + AH2. It catalyses the reaction 3,3'-diiodo-L-thyronine + iodide + A + H(+) = 3,3',5-triiodo-L-thyronine + AH2. It carries out the reaction 3-iodo-L-thyronine + iodide + A + H(+) = 3,5-diiodo-L-thyronine + AH2. The enzyme catalyses L-thyronine + iodide + A + H(+) = 3-iodo-L-thyronine + AH2. The catalysed reaction is 3',5'-diiodo-L-thyronine + iodide + A + H(+) = 3,3',5'-triiodo-L-thyronine + AH2. It catalyses the reaction 3'-iodo-L-thyronine + iodide + A + H(+) = 3,3'-diiodo-L-thyronine + AH2. It carries out the reaction 3,3',5'-triiodothyronamine + iodide + A + H(+) = 3,3',5,5'-tetraiodothyronamine + AH2. The enzyme catalyses 3',5'-diiodothyronamine + iodide + A + H(+) = 3,3',5'-triiodothyronamine + AH2. The catalysed reaction is 3,3'-diiodothyronamine + iodide + A + H(+) = 3,3',5-triiodothyronamine + AH2. It catalyses the reaction 3-iodothyronamine + iodide + A + H(+) = 3,5-diiodothyronamine + AH2. It carries out the reaction 3'-iodothyronamine + iodide + A + H(+) = 3,3'-diiodothyronamine + AH2. The enzyme catalyses thyronamine + iodide + A + H(+) = 3-iodothyronamine + AH2. Functionally, plays a crucial role in the metabolism of thyroid hormones (TH) and has specific roles in TH activation and inactivation by deiodination, particularly in different tissues. Catalyzes the deiodination of L-thyroxine (T4) to 3,3',5'-triiodothyronine (rT3), 3,5-diiodothyronine (3,5-T2) to 3-monoiodothyronine (3-T1), rT3 to 3',5'-diiodothyronine (3',5'-T2) and 3,3'-diiodothyronine (3,3'-T2) to 3'-monoiodothyronine (3'-T1) via inner-ring deiodination (IRD). Catalyzes the deiodination of 3,5,3'-triiodothyronine (T3) to 3,3'-diiodothyronine (3,3'-T2) via IRD. Catalyzes the deiodination of 3-T1 to L-thyronine (T0) via outer-ring deiodination (ORD). Catalyzes the tyrosyl ring deiodinations of 3,3',5,5'-tetraiodothyronamine, 3,3',5'-triiodothyronamine, 3,5,3'-triiodothyronamine, 3,5-diiodothyronamine, 3,3'-diiodothyronamine and 3-iodothyronamine. This Sus scrofa (Pig) protein is Thyroxine 5-deiodinase (DIO3).